We begin with the raw amino-acid sequence, 248 residues long: PF03932 family protein CutC (248 aa).

Belongs to the CutC family. As to quaternary structure, homodimer.

The protein resides in the cytoplasm. This is PF03932 family protein CutC from Shigella boydii serotype 4 (strain Sb227).